The sequence spans 393 residues: MTMLETKTDPMVISMGPHHPSMHGVLRLIVTLDGENVIDCEPVLGYLHRGMEKIAENRTIVQYLPYVTRWDYLATMFTEAITVNAPERLANIEVPKRASYIRVIMLELSRIASHLLWLGPFMADIGAQTPFFYIFREREMIYDLFEAATGMRMMHNYFRIGGVAADLPYGWVDKCLDFCDYFLPKVDEYERLITNNPIFLKRVKDIGKISKEDAINWGLSGPMLRASGVKWDLRKVDNYECYDELDWSIQWQSDGDCLARYQVRIGEMRESIKIIQQALKAIPGGPYENLEARRLSKGRKSEWNNFEYQFIGKKPSPTFKMPKQEHYVRVEAPKGELGVFLIGDDNVFPWRWKIRAPGFINVQILPQLVQGMKLADIMTILGSIDIIMGEVDR.

The protein belongs to the complex I 49 kDa subunit family. As to quaternary structure, NDH is composed of at least 16 different subunits, 5 of which are encoded in the nucleus.

Its subcellular location is the plastid. The protein localises to the chloroplast thylakoid membrane. The enzyme catalyses a plastoquinone + NADH + (n+1) H(+)(in) = a plastoquinol + NAD(+) + n H(+)(out). It carries out the reaction a plastoquinone + NADPH + (n+1) H(+)(in) = a plastoquinol + NADP(+) + n H(+)(out). NDH shuttles electrons from NAD(P)H:plastoquinone, via FMN and iron-sulfur (Fe-S) centers, to quinones in the photosynthetic chain and possibly in a chloroplast respiratory chain. The immediate electron acceptor for the enzyme in this species is believed to be plastoquinone. Couples the redox reaction to proton translocation, and thus conserves the redox energy in a proton gradient. The polypeptide is NAD(P)H-quinone oxidoreductase subunit H, chloroplastic (Chlorokybus atmophyticus (Soil alga)).